We begin with the raw amino-acid sequence, 182 residues long: Putative manganese efflux pump MntP (182 aa).

A run of 6 helical transmembrane segments spans residues 6–26 (LIPLIIMAFALGMDAFSVSLG), 37–57 (ILYIGMTIGIFHIIMPFIGMV), 71–91 (HFAGAILLIGLGFYIVYSTIL), 101–121 (IGISLFVFAFGVSIDSFSVGL), 131–151 (IITILLFGFVSMLLAWIGLLI), and 162–182 (YGEIVGGIILVGFGLYILFPI).

This sequence belongs to the MntP (TC 9.B.29) family.

Its subcellular location is the cell membrane. Functionally, probably functions as a manganese efflux pump. The sequence is that of Putative manganese efflux pump MntP from Bacillus cereus (strain B4264).